Reading from the N-terminus, the 228-residue chain is Glutamate transport system permease protein GluC (228 aa).

The next 4 helical transmembrane spans lie at F16–I36, L64–A84, A100–I120, and L195–L215. The ABC transmembrane type-1 domain maps to F16 to L217.

This sequence belongs to the binding-protein-dependent transport system permease family. HisMQ subfamily. As to quaternary structure, the complex is composed of two ATP-binding proteins (GluA), two transmembrane proteins (GluC and GluD) and a solute-binding protein (GluB).

Its subcellular location is the cell membrane. Its function is as follows. Part of the ABC transporter complex GluABCD involved in glutamate uptake. Probably responsible for the translocation of the substrate across the membrane. This chain is Glutamate transport system permease protein GluC, found in Corynebacterium efficiens (strain DSM 44549 / YS-314 / AJ 12310 / JCM 11189 / NBRC 100395).